Consider the following 220-residue polypeptide: FMN-dependent NADH:quinone oxidoreductase 1 (220 aa).

18-20 (SVS) is a binding site for FMN.

Belongs to the azoreductase type 1 family. In terms of assembly, homodimer. It depends on FMN as a cofactor.

The catalysed reaction is 2 a quinone + NADH + H(+) = 2 a 1,4-benzosemiquinone + NAD(+). It catalyses the reaction N,N-dimethyl-1,4-phenylenediamine + anthranilate + 2 NAD(+) = 2-(4-dimethylaminophenyl)diazenylbenzoate + 2 NADH + 2 H(+). In terms of biological role, quinone reductase that provides resistance to thiol-specific stress caused by electrophilic quinones. Its function is as follows. Also exhibits azoreductase activity. Catalyzes the reductive cleavage of the azo bond in aromatic azo compounds to the corresponding amines. This Bacillus anthracis protein is FMN-dependent NADH:quinone oxidoreductase 1.